Reading from the N-terminus, the 101-residue chain is MSLKTSFDENIKQKHKIEKPKMYKVILHNDDYTTMEFVIEILINVFNKVPANAVKITFDVHKNGIGIAGVYPYDIAATKINEVKKLAYKNGYPLKLTMGEV.

It belongs to the ClpS family. As to quaternary structure, binds to the N-terminal domain of the chaperone ClpA.

Functionally, involved in the modulation of the specificity of the ClpAP-mediated ATP-dependent protein degradation. This chain is ATP-dependent Clp protease adapter protein ClpS, found in Clostridium acetobutylicum (strain ATCC 824 / DSM 792 / JCM 1419 / IAM 19013 / LMG 5710 / NBRC 13948 / NRRL B-527 / VKM B-1787 / 2291 / W).